The following is a 125-amino-acid chain: Anticoagulant salivary protein 14 (125 aa).

An N-terminal signal peptide occupies residues 1 to 21; it reads MGLTGTMLVLVSLAFFGSAAA. Asn26, Asn81, and Asn87 each carry an N-linked (GlcNAc...) asparagine glycan. Residues 75-86 show a composition bias toward polar residues; that stretch reads GECHLTNNSGGP. Positions 75–125 are disordered; sequence GECHLTNNSGGPNETDDYTPAPTEKPKQKKKKTKKTKKPKRKSKKDQEKNL. The interval 91 to 125 is responsible for anticoagulant activity; the sequence is DYTPAPTEKPKQKKKKTKKTKKPKRKSKKDQEKNL. The segment covering 101–118 has biased composition (basic residues); that stretch reads KQKKKKTKKTKKPKRKSK.

It belongs to the salp14 family. In terms of tissue distribution, salivary gland (at protein level). Saliva (at protein level).

It is found in the secreted. Salivary anticoagulant protein that facilitates blood feeding of adult ticks on vertebrate species. Inhibits host coagulation factor Xa (F10). Blocks the assembly and/or early activity of the prothrombinase complex (Xa-Va/F10-F5). Inhibits the lectin pathway of complement system activation in the host. The chain is Anticoagulant salivary protein 14 from Ixodes scapularis (Black-legged tick).